We begin with the raw amino-acid sequence, 25 residues long: Antimicrobial peptide scolopin-2 (25 aa).

Expressed by the venom gland.

Its subcellular location is the secreted. Antimicrobial peptide against both Gram-positive, -negative and yeast. Also induces histamine release by mast cells and shows moderate hemolytic activities against both human and rabbit red cells. The polypeptide is Antimicrobial peptide scolopin-2 (Scolopendra mutilans (Chinese red-headed centipede)).